We begin with the raw amino-acid sequence, 91 residues long: Small ribosomal subunit protein bS16 (91 aa).

Belongs to the bacterial ribosomal protein bS16 family.

The protein is Small ribosomal subunit protein bS16 of Levilactobacillus brevis (strain ATCC 367 / BCRC 12310 / CIP 105137 / JCM 1170 / LMG 11437 / NCIMB 947 / NCTC 947) (Lactobacillus brevis).